The sequence spans 155 residues: MKAVISTVSQASVDVRDDSGEVRRVGEVSGPALLALIGSGRDDDADAWETMVRKIAELRLFPASGEPWGGQRDLSVEEVGGSVLVVSQFTLMGKTKRGRRPSWSEAMPGPAAEPVIEKIVHGLRNRGIHVETGEFGADMQVSSVNEGPYTVLVEC.

The Gly-cisPro motif, important for rejection of L-amino acids signature appears at 147–148 (GP).

It belongs to the DTD family. As to quaternary structure, homodimer.

It is found in the cytoplasm. It catalyses the reaction glycyl-tRNA(Ala) + H2O = tRNA(Ala) + glycine + H(+). The enzyme catalyses a D-aminoacyl-tRNA + H2O = a tRNA + a D-alpha-amino acid + H(+). Its function is as follows. An aminoacyl-tRNA editing enzyme that deacylates mischarged D-aminoacyl-tRNAs. Also deacylates mischarged glycyl-tRNA(Ala), protecting cells against glycine mischarging by AlaRS. Acts via tRNA-based rather than protein-based catalysis; rejects L-amino acids rather than detecting D-amino acids in the active site. By recycling D-aminoacyl-tRNA to D-amino acids and free tRNA molecules, this enzyme counteracts the toxicity associated with the formation of D-aminoacyl-tRNA entities in vivo and helps enforce protein L-homochirality. This Corynebacterium urealyticum (strain ATCC 43042 / DSM 7109) protein is D-aminoacyl-tRNA deacylase.